The chain runs to 200 residues: NADH-quinone oxidoreductase chain 10 (200 aa).

Transmembrane regions (helical) follow at residues 2–22 (MTFA…MVVI), 26–46 (PVHS…LFVL), 51–71 (FVAM…FLFV), 90–110 (LPLA…AFSG), and 144–164 (VLMF…AIVL).

Belongs to the complex I subunit 6 family. NDH-1 is composed of at least 14 different subunits, Nqo1 to Nqo14. The complex has a L-shaped structure, with the hydrophobic arm (subunits Nqo7, Nqo8, Nqo10 to Nqo14) embedded in the inner membrane and the hydrophilic peripheral arm (subunits Nqo1 to Nqo6, Nqo9) protruding into the bacterial cytoplasm. The hydrophilic domain contains all the redox centers.

The protein localises to the cell inner membrane. The enzyme catalyses a quinone + NADH + 5 H(+)(in) = a quinol + NAD(+) + 4 H(+)(out). In terms of biological role, NDH-1 shuttles electrons from NADH, via FMN and iron-sulfur (Fe-S) centers, to quinones in the respiratory chain. The immediate electron acceptor for the enzyme in this species is believed to be ubiquinone. Couples the redox reaction to proton translocation (for every two electrons transferred, four hydrogen ions are translocated across the cytoplasmic membrane), and thus conserves the redox energy in a proton gradient. The chain is NADH-quinone oxidoreductase chain 10 from Paracoccus denitrificans.